We begin with the raw amino-acid sequence, 215 residues long: MRLRHKPWAKEYMEAQEHVFIQHPEQLKGNWSTEFGNDHPLFIEVGSGKGQFILGMAKQHPDVNFIAIELFESVAVSIVQKLVETPMPNVRVLTVDAKRLVDYFEAGEVDRVYLNFSDPWPKTRHAKRRLTYKTFLATYEAILPKAGEIHFKTDNRGLFEYSLQSMSQYGMFFTEISLDLHVNEPEDNIRTEYEERFSALGQPIYRMEAVFRPKN.

S-adenosyl-L-methionine contacts are provided by Glu44, Glu69, Asp96, and Asp118. The active site involves Asp118. Substrate contacts are provided by residues Lys122, Asp154, and 191-194; that span reads TEYE.

Belongs to the class I-like SAM-binding methyltransferase superfamily. TrmB family.

It carries out the reaction guanosine(46) in tRNA + S-adenosyl-L-methionine = N(7)-methylguanosine(46) in tRNA + S-adenosyl-L-homocysteine. It participates in tRNA modification; N(7)-methylguanine-tRNA biosynthesis. Catalyzes the formation of N(7)-methylguanine at position 46 (m7G46) in tRNA. This Exiguobacterium sp. (strain ATCC BAA-1283 / AT1b) protein is tRNA (guanine-N(7)-)-methyltransferase.